We begin with the raw amino-acid sequence, 314 residues long: UPF0761 membrane protein VP0125 (314 aa).

Helical transmembrane passes span 41-61 (YLAYITLLSIVPMLTVLLSIL), 104-124 (MSAVGGGFLFIAALMLISNID), 139-159 (LVFSFSMYWMVLTLGPILVGA), 185-205 (FLRWLPLLLSFFAFLGLYILV), 217-237 (VGAAVAAILFELSKKGFALYI), and 249-269 (ALAAIPILFVWVYLCWMIVLL). The segment at 295–314 (ESQLANEGSESSDSANSTSQ) is disordered.

Belongs to the UPF0761 family.

It is found in the cell inner membrane. The protein is UPF0761 membrane protein VP0125 of Vibrio parahaemolyticus serotype O3:K6 (strain RIMD 2210633).